Reading from the N-terminus, the 1083-residue chain is MSVIYRAHRVAIANRTASRNVRVARWVAAIAGLIGFVSSVVTPLLPVVQTTATLNWPQNGQLNSVTAPLISLTPVDITATVPCAVVAALPPSGGVVLGTAPKQGKDANLNALFIDVNSQRVDVTDRNVVILSVPRNQVAGDAGAPGCSSIEVTSTHAGTFATFVGVTDSAGNPLRGGFPDPNLRPQIVGVFTDLTGGAPSGLRLSATIDTRFSSTPTTLKRFAMMLAIITTVGALVALWRLDQLDGRRMRRLIPARWSMFTLVDVAVIFGFLLWHVIGANSSDDGYQMQMARTADHSGYMANYFRWFGSPEDPFGWYYNLLALMIHVSDASMWIRLPDLICGVACWLLLSREVLPRLGPAIVGFKPALWAAGLVLLAAWMPFNNGLRPEGQIALGALITYVLIERAITYGRMTPVALATLTAAFTIGIQPTGLIAVAALLAGGRPMLYILVRRHRAVGAWPLVAPLLAAGTVVLTVVFAEQTLSTVLEATKVRTAIGPAQAWYTENLRYYYLILPTVDGSLSRRFGFLITALCLFTAVLITLRRKQIPGVARGPAWRLIGTILGTMFFLTFAPTKWVHHFGLFAALGAAVAALTTVLVSHEVLRWSRNRMAFLAALLFVMTLCFATTNGWWYVSSYGVPFNSAMPRIDGITFSTIFFILFAIVALYAYYLHFTNTGHGEGRLIRTLTVSFWAPIPFAAGLMTLVFIGSMVAGIVRQYPTYSNGWANIRALTGGCGLADDVLVEPDSNAGYMTALPSNYGPLGPLGGVNAIGFTANGVPEHTVAEAIRITPNQPGTDYDWEAPTKLKAPGINGSVVPLPYGLNPNKVPIAGTYTTGAQQQSRLTSAWYQLPKPDDRHPLVVVTAAGKITGNSVLHGHTYGQTVVLEYGDPGPNGGLVPAGRLVPDDLYGEQPKAWRNLRFARSQMPFDAVAVRVVAENLSLTPEDWIAVTPPRVPELRSLQEYVGSSQPVLLDWEVGLAFPCQQPMLHANGVTDIPKFRITPDYSAKKIDTDTWEDGANGGLLGITDLLLRAHVMSTYLARDWGRDWGSLRKFDPLVDTHPAQLDLDTATRSGWWSPGKIRIKP.

A run of 13 helical transmembrane segments spans residues 23-45 (VARWVAAIAGLIGFVSSVVTPLL), 222-239 (FAMMLAIITTVGALVALW), 252-274 (LIPARWSMFTLVDVAVIFGFLLW), 331-350 (SMWIRLPDLICGVACWLLLS), 357-379 (LGPAIVGFKPALWAAGLVLLAAW), 421-443 (TAAFTIGIQPTGLIAVAALLAGG), 456-478 (AVGAWPLVAPLLAAGTVVLTVVF), 525-542 (FGFLITALCLFTAVLITL), 555-572 (AWRLIGTILGTMFFLTFA), 576-598 (WVHHFGLFAALGAAVAALTTVLV), 611-633 (AFLAALLFVMTLCFATTNGWWYV), 648-670 (DGITFSTIFFILFAIVALYAYYL), and 690-712 (FWAPIPFAAGLMTLVFIGSMVAG).

Belongs to the emb family.

The protein resides in the cell membrane. In terms of biological role, arabinosyl transferase responsible for the polymerization of arabinose into the arabinan of arabinogalactan. This Mycobacterium leprae (strain TN) protein is Probable arabinosyltransferase B (embB).